Here is a 287-residue protein sequence, read N- to C-terminus: Protease HtpX (287 aa).

Transmembrane regions (helical) follow at residues 4–24 and 37–57; these read VLLF…VFNI and VGLL…SLWI. Residue His143 participates in Zn(2+) binding. Glu144 is a catalytic residue. His147 lines the Zn(2+) pocket. Helical transmembrane passes span 158-178 and 194-214; these read LIQG…ASAI and GVVM…VMWF. Residue Glu219 participates in Zn(2+) binding.

The protein belongs to the peptidase M48B family. Zn(2+) is required as a cofactor.

The protein localises to the cell inner membrane. The sequence is that of Protease HtpX from Idiomarina loihiensis (strain ATCC BAA-735 / DSM 15497 / L2-TR).